The following is a 124-amino-acid chain: NADH-quinone oxidoreductase subunit K (124 aa).

3 helical membrane-spanning segments follow: residues 28–48 (MEHGLILAAIIFAIGLCGVMV), 52–72 (FLFMLMSLEIMMSAAGLAFIV), and 84–104 (IMFIFILTLAAAEASLGLAIL).

It belongs to the complex I subunit 4L family. NDH-1 is composed of 14 different subunits. Subunits NuoA, H, J, K, L, M, N constitute the membrane sector of the complex.

It is found in the cell inner membrane. It catalyses the reaction a quinone + NADH + 5 H(+)(in) = a quinol + NAD(+) + 4 H(+)(out). NDH-1 shuttles electrons from NADH, via FMN and iron-sulfur (Fe-S) centers, to quinones in the respiratory chain. The immediate electron acceptor for the enzyme in this species is believed to be ubiquinone. Couples the redox reaction to proton translocation (for every two electrons transferred, four hydrogen ions are translocated across the cytoplasmic membrane), and thus conserves the redox energy in a proton gradient. The sequence is that of NADH-quinone oxidoreductase subunit K from Psychrobacter sp. (strain PRwf-1).